The following is a 303-amino-acid chain: Crk-like protein (303 aa).

The SH2 domain occupies 14 to 102 (WYMGPVTRQE…LDTTTLIEPA (89 aa)). One can recognise an SH3 1 domain in the interval 123–183 (ENLEYVRTLY…PVPYVEKLVR (61 aa)). At Tyr-127 the chain carries Phosphotyrosine. The disordered stretch occupies residues 184 to 203 (SSPHGKHGNRNSNSYGIPEP). A Phosphotyrosine modification is found at Tyr-207. In terms of domain architecture, SH3 2 spans 235 to 296 (NGPVFAKAIQ…PFTHVKIFDP (62 aa)).

The protein belongs to the CRK family. In terms of assembly, interacts with DOCK2 and EPOR. Interacts with phosphorylated CBLB and IRS4. Interacts with INPP5D/SHIP1. Interacts with BCAR1/CAS and NEDD9/HEF1. In terms of processing, phosphorylated on tyrosine. Phosphorylation is prominent during early development, but decreases at later embryonic stages and in newborn mice.

In terms of biological role, may mediate the transduction of intracellular signals. The polypeptide is Crk-like protein (Crkl) (Mus musculus (Mouse)).